The primary structure comprises 318 residues: Ribosomal RNA small subunit methyltransferase A (318 aa).

S-adenosyl-L-methionine is bound by residues Asn40, Val42, Gly67, Glu88, Asp118, and Asn137. Residues 296–305 (ADRGGSDREG) are compositionally biased toward basic and acidic residues. Residues 296–318 (ADRGGSDREGTSPPTAGQGAPAC) form a disordered region.

It belongs to the class I-like SAM-binding methyltransferase superfamily. rRNA adenine N(6)-methyltransferase family. RsmA subfamily.

It is found in the cytoplasm. It catalyses the reaction adenosine(1518)/adenosine(1519) in 16S rRNA + 4 S-adenosyl-L-methionine = N(6)-dimethyladenosine(1518)/N(6)-dimethyladenosine(1519) in 16S rRNA + 4 S-adenosyl-L-homocysteine + 4 H(+). Its function is as follows. Specifically dimethylates two adjacent adenosines (A1518 and A1519) in the loop of a conserved hairpin near the 3'-end of 16S rRNA in the 30S particle. May play a critical role in biogenesis of 30S subunits. In Mycobacterium avium (strain 104), this protein is Ribosomal RNA small subunit methyltransferase A.